The primary structure comprises 364 residues: Long-wave-sensitive opsin 1 (364 aa).

Over 1–52 (MTQRWGPQRLAGGQPHAGLEDSTRASIFTYTNSNATRGPFEGPNYHIAPRWV) the chain is Extracellular. S22 carries an O-linked (GlcNAc) serine glycan. An N-linked (GlcNAc...) asparagine glycan is attached at N34. Residues 53-77 (YHVTSAWMIFVVIASVFTNGLVLAA) form a helical membrane-spanning segment. At 78 to 89 (TMKFKKLRHPLN) the chain is on the cytoplasmic side. The helical transmembrane segment at 90–115 (WILVNLAVADLAETIIASTISVVNQI) threads the bilayer. Residues 116–129 (YGYFVLGHPMCVLE) are Extracellular-facing. C126 and C203 are disulfide-bonded. The chain crosses the membrane as a helical span at residues 130–149 (GYTVSLCGITGLWSLAIISW). The Cytoplasmic portion of the chain corresponds to 150–168 (ERWLVVCKPFGNVRFDAKL). Residues 169–192 (AIAGIAFSWIWAAVWTAPPIFGWS) traverse the membrane as a helical segment. Residues 193–218 (RYWPHGLKTSCGPDVFSGSSYPGVQS) lie on the Extracellular side of the membrane. A helical membrane pass occupies residues 219–246 (YMIVLMITCCIIPLSVIVLCYLQVWLAI). Topologically, residues 247–268 (RAVAKQQKESESTQKAEKEVTR) are cytoplasmic. The helical transmembrane segment at 269–292 (MVMVMIFAYCVCWGPYTFFACFAA) threads the bilayer. Residues 293–300 (AHPGYAFH) lie on the Extracellular side of the membrane. Residues 301-325 (PLVAALPAYFAKSATIYNPIIYVFM) form a helical membrane-spanning segment. N6-(retinylidene)lysine is present on K312. Topologically, residues 326-364 (NRQFRNCIMQLFGKKVDDGSELSSASRTEASSVSSVSPA) are cytoplasmic.

Belongs to the G-protein coupled receptor 1 family. Opsin subfamily. In terms of processing, phosphorylated on some or all of the serine and threonine residues present in the C-terminal region. In terms of tissue distribution, the three color pigments are found in the cone photoreceptor cells. Expressed in retina.

The protein resides in the membrane. Visual pigments are the light-absorbing molecules that mediate vision. They consist of an apoprotein, opsin, covalently linked to cis-retinal. The sequence is that of Long-wave-sensitive opsin 1 (OPN1LW) from Felis catus (Cat).